Reading from the N-terminus, the 519-residue chain is Cytosol aminopeptidase (519 aa).

A Phosphoserine modification is found at serine 42. Lysine 45 bears the N6-succinyllysine mark. Serine 54 bears the Phosphoserine mark. N6-succinyllysine occurs at positions 61 and 103. 2 positions are modified to phosphoserine: serine 180 and serine 194. Residues leucine 202, methionine 203, and threonine 205 each contribute to the Zn(2+) site. N6-acetyllysine; alternate is present on lysine 221. Position 221 is an N6-succinyllysine; alternate (lysine 221). Serine 238 bears the Phosphoserine mark. The Zn(2+) site is built by lysine 282 and aspartate 287. Substrate contacts are provided by lysine 282, aspartate 287, serine 292, and lysine 294. Mg(2+) is bound at residue aspartate 287. The active site involves lysine 294. The Zn(2+) site is built by arginine 303, aspartate 305, aspartate 364, and glutamate 366. Aspartate 305 and aspartate 364 together coordinate substrate. Mg(2+)-binding residues include aspartate 364 and glutamate 366. Residue arginine 368 is part of the active site. Lysine 455 carries the post-translational modification N6-acetyllysine; alternate. An N6-succinyllysine; alternate modification is found at lysine 455. Lysine 476 bears the N6-succinyllysine mark. Position 489 is an N6-acetyllysine; alternate (lysine 489). The residue at position 489 (lysine 489) is an N6-succinyllysine; alternate.

This sequence belongs to the peptidase M17 family. Homohexamer. It depends on Zn(2+) as a cofactor. The cofactor is Mn(2+).

Its subcellular location is the cytoplasm. It carries out the reaction Release of an N-terminal amino acid, Xaa-|-Yaa-, in which Xaa is preferably Leu, but may be other amino acids including Pro although not Arg or Lys, and Yaa may be Pro. Amino acid amides and methyl esters are also readily hydrolyzed, but rates on arylamides are exceedingly low.. The catalysed reaction is an S-substituted L-cysteinylglycine + H2O = an S-substituted L-cysteine + glycine. The enzyme catalyses L-cysteinylglycine + H2O = L-cysteine + glycine. It catalyses the reaction S-benzyl-L-cysteinylglycine + H2O = S-benzyl-L-cysteine + glycine. It carries out the reaction Release of N-terminal proline from a peptide.. In terms of biological role, cytosolic metallopeptidase that catalyzes the removal of unsubstituted N-terminal hydrophobic amino acids from various peptides. The presence of Zn(2+) ions is essential for the peptidase activity, and the association with other cofactors can modulate the substrate spectificity of the enzyme. For instance, in the presence of Mn(2+), it displays a specific Cys-Gly hydrolyzing activity of Cys-Gly-S-conjugates. Involved in the metabolism of glutathione and in the degradation of glutathione S-conjugates, which may play a role in the control of the cell redox status. In Homo sapiens (Human), this protein is Cytosol aminopeptidase.